Consider the following 372-residue polypeptide: Cytochrome b (372 aa).

4 consecutive transmembrane segments (helical) span residues 25 to 45 (FGSMLLTCLALQTSTGFFLAI), 69 to 90 (WIIQNLHAIGASMFFICIYTHI), 105 to 125 (WLSGTMLLIMLMATSFFGYVL), and 170 to 190 (FFALHFILPFMIISLSSIHII). Residues histidine 75 and histidine 89 each coordinate heme b. Heme b contacts are provided by histidine 174 and histidine 188. Residue histidine 193 participates in a ubiquinone binding. 4 helical membrane passes run 218-238 (YKDTLMITAMITSMLIIMSFM), 280-300 (LGGTLALLMSILILTTAPFTH), 312-332 (LTQIMFWTLIVTFITITWSAT), and 339-358 (FIFISQTASIIYFSFFIINP).

This sequence belongs to the cytochrome b family. As to quaternary structure, the cytochrome bc1 complex contains 3 respiratory subunits (MT-CYB, CYC1 and UQCRFS1), 2 core proteins (UQCRC1 and UQCRC2) and probably 6 low-molecular weight proteins. Heme b serves as cofactor.

It is found in the mitochondrion inner membrane. In terms of biological role, component of the ubiquinol-cytochrome c reductase complex (complex III or cytochrome b-c1 complex) that is part of the mitochondrial respiratory chain. The b-c1 complex mediates electron transfer from ubiquinol to cytochrome c. Contributes to the generation of a proton gradient across the mitochondrial membrane that is then used for ATP synthesis. The polypeptide is Cytochrome b (MT-CYB) (Hydrophis semperi (Lake Taal snake)).